We begin with the raw amino-acid sequence, 294 residues long: tRNA dimethylallyltransferase (294 aa).

ATP is bound at residue 10–17; it reads GITASGKS. 12-17 contributes to the substrate binding site; it reads TASGKS. Positions 36–39 are interaction with substrate tRNA; that stretch reads DSKQ.

It belongs to the IPP transferase family. In terms of assembly, monomer. Mg(2+) serves as cofactor.

The catalysed reaction is adenosine(37) in tRNA + dimethylallyl diphosphate = N(6)-dimethylallyladenosine(37) in tRNA + diphosphate. Catalyzes the transfer of a dimethylallyl group onto the adenine at position 37 in tRNAs that read codons beginning with uridine, leading to the formation of N6-(dimethylallyl)adenosine (i(6)A). In Wolbachia sp. subsp. Drosophila simulans (strain wRi), this protein is tRNA dimethylallyltransferase.